The following is a 215-amino-acid chain: Chaperone protein TorD (215 aa).

It belongs to the TorD/DmsD family. TorD subfamily.

The protein localises to the cytoplasm. In terms of biological role, involved in the biogenesis of TorA. Acts on TorA before the insertion of the molybdenum cofactor and, as a result, probably favors a conformation of the apoenzyme that is competent for acquiring the cofactor. This chain is Chaperone protein TorD, found in Vibrio parahaemolyticus serotype O3:K6 (strain RIMD 2210633).